Reading from the N-terminus, the 750-residue chain is Sulfhydryl oxidase 1 (750 aa).

The first 32 residues, 1 to 32 (MGRCNRGSGPPSSLLLLLLLLLWLLAVPGASA), serve as a signal peptide directing secretion. One can recognise a Thioredoxin domain in the interval 39–159 (YSPSDPLTLL…RERLIDALES (121 aa)). Catalysis depends on nucleophile residues Cys73 and Cys76. 2 disulfides stabilise this stretch: Cys73/Cys76 and Cys104/Cys113. Residues Asn133 and Asn246 are each glycosylated (N-linked (GlcNAc...) asparagine). A disulfide bridge connects residues Cys396 and Cys408. Positions 399–506 (SEPHFRGFPC…EDPQFPKVQW (108 aa)) constitute an ERV/ALR sulfhydryl oxidase domain. FAD is bound by residues Arg404, Trp411, and His415. Phosphoserine is present on Ser429. Cysteines 452 and 455 form a disulfide. Residues Asp454, His458, 481–488 (WSSHNRVN), Lys503, and Trp506 each bind FAD. Cysteines 512 and 515 form a disulfide. The N-linked (GlcNAc...) asparagine glycan is linked to Asn578. Residues 578–645 (NSTVDLGKPE…REQPRGQWHL (68 aa)) form a disordered region. The span at 624–639 (PPEHMAELQTNEREQP) shows a compositional bias: basic and acidic residues. Residues 713 to 733 (ISLCVGLYSLSFMGLLAMYAY) traverse the membrane as a helical segment.

The protein belongs to the quiescin-sulfhydryl oxidase (QSOX) family. Monomer. FAD is required as a cofactor. In terms of processing, N-glycosylated. O-glycosylated on Thr and Ser residues.

Its subcellular location is the golgi apparatus membrane. The protein resides in the secreted. It carries out the reaction 2 R'C(R)SH + O2 = R'C(R)S-S(R)CR' + H2O2. Functionally, catalyzes the oxidation of sulfhydryl groups in peptide and protein thiols to disulfides with the reduction of oxygen to hydrogen peroxide. Plays a role in disulfide bond formation in a variety of extracellular proteins. In fibroblasts, required for normal incorporation of laminin into the extracellular matrix, and thereby for normal cell-cell adhesion and cell migration. The chain is Sulfhydryl oxidase 1 (QSOX1) from Pongo abelii (Sumatran orangutan).